We begin with the raw amino-acid sequence, 157 residues long: Small ribosomal subunit protein uS7 (157 aa).

This sequence belongs to the universal ribosomal protein uS7 family. As to quaternary structure, part of the 30S ribosomal subunit. Contacts proteins S9 and S11.

Functionally, one of the primary rRNA binding proteins, it binds directly to 16S rRNA where it nucleates assembly of the head domain of the 30S subunit. Is located at the subunit interface close to the decoding center, probably blocks exit of the E-site tRNA. In Borrelia duttonii (strain Ly), this protein is Small ribosomal subunit protein uS7.